The following is a 552-amino-acid chain: CTP synthase (552 aa).

An amidoligase domain region spans residues methionine 1 to leucine 265. Serine 13 lines the CTP pocket. Serine 13 serves as a coordination point for UTP. ATP is bound by residues serine 14–isoleucine 19 and aspartate 71. Residues aspartate 71 and glutamate 139 each contribute to the Mg(2+) site. CTP contacts are provided by residues aspartate 146–glutamate 148, lysine 186–glutamine 191, and lysine 222. Residues lysine 186 to glutamine 191 and lysine 222 each bind UTP. The Glutamine amidotransferase type-1 domain maps to threonine 290 to alanine 545. Glycine 351 is a binding site for L-glutamine. Cysteine 378 functions as the Nucleophile; for glutamine hydrolysis in the catalytic mechanism. L-glutamine is bound by residues leucine 379–glutamine 382, glutamate 402, and arginine 468. Residues histidine 518 and glutamate 520 contribute to the active site.

Belongs to the CTP synthase family. Homotetramer.

The catalysed reaction is UTP + L-glutamine + ATP + H2O = CTP + L-glutamate + ADP + phosphate + 2 H(+). The enzyme catalyses L-glutamine + H2O = L-glutamate + NH4(+). It catalyses the reaction UTP + NH4(+) + ATP = CTP + ADP + phosphate + 2 H(+). It functions in the pathway pyrimidine metabolism; CTP biosynthesis via de novo pathway; CTP from UDP: step 2/2. Its activity is regulated as follows. Allosterically activated by GTP, when glutamine is the substrate; GTP has no effect on the reaction when ammonia is the substrate. The allosteric effector GTP functions by stabilizing the protein conformation that binds the tetrahedral intermediate(s) formed during glutamine hydrolysis. Inhibited by the product CTP, via allosteric rather than competitive inhibition. Functionally, catalyzes the ATP-dependent amination of UTP to CTP with either L-glutamine or ammonia as the source of nitrogen. Regulates intracellular CTP levels through interactions with the four ribonucleotide triphosphates. The protein is CTP synthase of Herminiimonas arsenicoxydans.